The chain runs to 255 residues: Probable UDP-N-acetylglucosamine pyrophosphorylase (255 aa).

It carries out the reaction N-acetyl-alpha-D-glucosamine 1-phosphate + UTP + H(+) = UDP-N-acetyl-alpha-D-glucosamine + diphosphate. It functions in the pathway nucleotide-sugar biosynthesis; UDP-N-acetyl-alpha-D-glucosamine biosynthesis; UDP-N-acetyl-alpha-D-glucosamine from N-acetyl-alpha-D-glucosamine 1-phosphate: step 1/1. In Acanthamoeba polyphaga (Amoeba), this protein is Probable UDP-N-acetylglucosamine pyrophosphorylase.